The chain runs to 223 residues: Cytidylate kinase (223 aa).

10–18 provides a ligand contact to ATP; it reads GPASSGKST.

It belongs to the cytidylate kinase family. Type 1 subfamily.

The protein localises to the cytoplasm. The catalysed reaction is CMP + ATP = CDP + ADP. It catalyses the reaction dCMP + ATP = dCDP + ADP. The polypeptide is Cytidylate kinase (Streptococcus pneumoniae (strain Taiwan19F-14)).